The sequence spans 478 residues: UDP-N-acetylmuramate--L-alanine ligase (478 aa).

112-118 serves as a coordination point for ATP; that stretch reads GTHGKTT.

This sequence belongs to the MurCDEF family.

Its subcellular location is the cytoplasm. The catalysed reaction is UDP-N-acetyl-alpha-D-muramate + L-alanine + ATP = UDP-N-acetyl-alpha-D-muramoyl-L-alanine + ADP + phosphate + H(+). It participates in cell wall biogenesis; peptidoglycan biosynthesis. In terms of biological role, cell wall formation. In Polaromonas naphthalenivorans (strain CJ2), this protein is UDP-N-acetylmuramate--L-alanine ligase.